A 75-amino-acid chain; its full sequence is Large ribosomal subunit protein bL31 (75 aa).

This sequence belongs to the bacterial ribosomal protein bL31 family. Type A subfamily. As to quaternary structure, part of the 50S ribosomal subunit.

Functionally, binds the 23S rRNA. The protein is Large ribosomal subunit protein bL31 of Bradyrhizobium diazoefficiens (strain JCM 10833 / BCRC 13528 / IAM 13628 / NBRC 14792 / USDA 110).